The primary structure comprises 808 residues: Protein SQS1 (808 aa).

2 stretches are compositionally biased toward basic residues: residues 1-20 and 28-37; these read MAKR…KRGG and RGSKRGRGGR. Disordered stretches follow at residues 1-67, 151-180, and 485-529; these read MAKR…GDLS, RSKN…DMEI, and ETPP…EELG. Basic and acidic residues-rich tracts occupy residues 39-48 and 153-179; these read RGFEETERSA and KNQE…KDME. One can recognise an R3H domain in the interval 621-683; sequence GFHVQNIRDE…HTHIMVEKVK (63 aa). Positions 748–795 constitute a G-patch domain; it reads QDNIGRRMLEKLGWSSGEGLGAHGNKGISIPVMARVKKSKSGLRHSKE. Residues 764-808 form a disordered region; the sequence is GEGLGAHGNKGISIPVMARVKKSKSGLRHSKEDEDTGRSSSFRKK. Basic residues predominate over residues 782–791; sequence RVKKSKSGLR.

The protein belongs to the SQS1 family.

The protein localises to the cytoplasm. Its subcellular location is the nucleus. Its function is as follows. May be involved in splicing. The sequence is that of Protein SQS1 (SQS1) from Candida glabrata (strain ATCC 2001 / BCRC 20586 / JCM 3761 / NBRC 0622 / NRRL Y-65 / CBS 138) (Yeast).